A 392-amino-acid polypeptide reads, in one-letter code: ATP phosphoribosyltransferase regulatory subunit (392 aa).

It belongs to the class-II aminoacyl-tRNA synthetase family. HisZ subfamily. Heteromultimer composed of HisG and HisZ subunits.

Its subcellular location is the cytoplasm. It functions in the pathway amino-acid biosynthesis; L-histidine biosynthesis; L-histidine from 5-phospho-alpha-D-ribose 1-diphosphate: step 1/9. Functionally, required for the first step of histidine biosynthesis. May allow the feedback regulation of ATP phosphoribosyltransferase activity by histidine. This chain is ATP phosphoribosyltransferase regulatory subunit, found in Synechococcus sp. (strain CC9902).